We begin with the raw amino-acid sequence, 266 residues long: Small ribosomal subunit protein uS2 (266 aa).

The tract at residues 233-266 (AVREEEFASAPDAGKKGRQAQPKKGKRASDAAAE) is disordered. Residues 248 to 258 (KGRQAQPKKGK) are compositionally biased toward basic residues.

It belongs to the universal ribosomal protein uS2 family.

The sequence is that of Small ribosomal subunit protein uS2 from Xylella fastidiosa (strain M23).